The chain runs to 291 residues: ATP synthase gamma chain (291 aa).

This sequence belongs to the ATPase gamma chain family. As to quaternary structure, F-type ATPases have 2 components, CF(1) - the catalytic core - and CF(0) - the membrane proton channel. CF(1) has five subunits: alpha(3), beta(3), gamma(1), delta(1), epsilon(1). CF(0) has three main subunits: a, b and c.

It localises to the cell inner membrane. Its function is as follows. Produces ATP from ADP in the presence of a proton gradient across the membrane. The gamma chain is believed to be important in regulating ATPase activity and the flow of protons through the CF(0) complex. The chain is ATP synthase gamma chain from Cupriavidus pinatubonensis (strain JMP 134 / LMG 1197) (Cupriavidus necator (strain JMP 134)).